The following is a 52-amino-acid chain: Large ribosomal subunit protein eL39 (52 aa).

Belongs to the eukaryotic ribosomal protein eL39 family.

This is Large ribosomal subunit protein eL39 from Caldivirga maquilingensis (strain ATCC 700844 / DSM 13496 / JCM 10307 / IC-167).